Consider the following 155-residue polypeptide: Cytochrome c-type biogenesis protein CcmE (155 aa).

The Cytoplasmic segment spans residues 1-8 (MNPVRKRR). A helical; Signal-anchor for type II membrane protein transmembrane segment spans residues 9–29 (LFIVLAILAGVGAAVALALSA). Over 30 to 155 (LQQNINLFYT…YENGKPGGAQ (126 aa)) the chain is Periplasmic. Positions 124 and 128 each coordinate heme.

This sequence belongs to the CcmE/CycJ family.

The protein localises to the cell inner membrane. Heme chaperone required for the biogenesis of c-type cytochromes. Transiently binds heme delivered by CcmC and transfers the heme to apo-cytochromes in a process facilitated by CcmF and CcmH. This is Cytochrome c-type biogenesis protein CcmE from Azotobacter vinelandii (strain DJ / ATCC BAA-1303).